The sequence spans 207 residues: Probable GTP-binding protein EngB (207 aa).

Positions 23 to 203 (GAPEVCFVGR…GAHIENWISP (181 aa)) constitute an EngB-type G domain. GTP contacts are provided by residues 31–38 (GRSNAGKS), 58–62 (GRTRL), 83–86 (DLPG), 150–153 (TKAD), and 182–184 (FSS). Mg(2+) contacts are provided by Ser38 and Thr60.

It belongs to the TRAFAC class TrmE-Era-EngA-EngB-Septin-like GTPase superfamily. EngB GTPase family. It depends on Mg(2+) as a cofactor.

In terms of biological role, necessary for normal cell division and for the maintenance of normal septation. The sequence is that of Probable GTP-binding protein EngB from Bordetella bronchiseptica (strain ATCC BAA-588 / NCTC 13252 / RB50) (Alcaligenes bronchisepticus).